A 150-amino-acid polypeptide reads, in one-letter code: Flagellar assembly factor FliW (150 aa).

This sequence belongs to the FliW family. In terms of assembly, interacts with translational regulator CsrA and flagellin(s).

It is found in the cytoplasm. Acts as an anti-CsrA protein, binds CsrA and prevents it from repressing translation of its target genes, one of which is flagellin. Binds to flagellin and participates in the assembly of the flagellum. The polypeptide is Flagellar assembly factor FliW (Leptospira interrogans serogroup Icterohaemorrhagiae serovar Lai (strain 56601)).